An 892-amino-acid polypeptide reads, in one-letter code: Translation initiation factor IF-2 (892 aa).

The interval 88-306 (KKRTFVKRDP…LQQGFQKPAQ (219 aa)) is disordered. 2 stretches are compositionally biased toward basic and acidic residues: residues 93 to 159 (VKRD…KDKV) and 166 to 216 (DMIK…EENK). Over residues 254–269 (GRGRNAKAARPAKKGK) the composition is skewed to basic residues. Positions 270–282 (HAESKADREEARA) are enriched in basic and acidic residues. A tr-type G domain is found at 391-560 (PRAPVVTIMG…LLQAEVLELK (170 aa)). Residues 400–407 (GHVDHGKT) are G1. Residue 400-407 (GHVDHGKT) coordinates GTP. The interval 425-429 (GITQH) is G2. The G3 stretch occupies residues 446-449 (DTPG). GTP contacts are provided by residues 446 to 450 (DTPGH) and 500 to 503 (NKID). Positions 500–503 (NKID) are G4. The interval 536 to 538 (SAK) is G5.

This sequence belongs to the TRAFAC class translation factor GTPase superfamily. Classic translation factor GTPase family. IF-2 subfamily.

The protein localises to the cytoplasm. One of the essential components for the initiation of protein synthesis. Protects formylmethionyl-tRNA from spontaneous hydrolysis and promotes its binding to the 30S ribosomal subunits. Also involved in the hydrolysis of GTP during the formation of the 70S ribosomal complex. The protein is Translation initiation factor IF-2 of Salmonella schwarzengrund (strain CVM19633).